We begin with the raw amino-acid sequence, 436 residues long: Proline transporter 3 (436 aa).

Helical transmembrane passes span 29 to 49 (SWFQ…VLGY), 52 to 72 (TVMV…ATAI), 118 to 138 (LFMI…AVYV), 151 to 171 (FIAI…HLSA), 172 to 192 (LGIW…VAIV), 216 to 236 (LFTI…GMLP), 254 to 274 (LYFQ…IGYW), 296 to 316 (ALAN…FASP), 345 to 365 (GGYI…GDFM), 366 to 386 (SLTG…HMYY), and 405 to 425 (VVFF…LIAL).

The protein belongs to the amino acid/polyamine transporter 2 family. Amino acid/auxin permease (AAAP) (TC 2.A.18.3) subfamily. Expressed in epidermal cells of leaves, sepals and petals.

The protein localises to the cell membrane. Proline transporter that mediates proline and glycine betaine transport. When expressed in a heterologous system (yeast), imports L-proline, glycine betaine and GABA across the plasma membrane. The sequence is that of Proline transporter 3 (PROT3) from Arabidopsis thaliana (Mouse-ear cress).